The sequence spans 366 residues: Ribosomal RNA large subunit methyltransferase M (366 aa).

S-adenosyl-L-methionine contacts are provided by residues Ser-188, 221–224, Asp-240, Asp-260, and Asp-277; that span reads CPGG. Lys-306 acts as the Proton acceptor in catalysis.

It belongs to the class I-like SAM-binding methyltransferase superfamily. RNA methyltransferase RlmE family. RlmM subfamily. As to quaternary structure, monomer.

The protein resides in the cytoplasm. It catalyses the reaction cytidine(2498) in 23S rRNA + S-adenosyl-L-methionine = 2'-O-methylcytidine(2498) in 23S rRNA + S-adenosyl-L-homocysteine + H(+). Catalyzes the 2'-O-methylation at nucleotide C2498 in 23S rRNA. This Salmonella agona (strain SL483) protein is Ribosomal RNA large subunit methyltransferase M.